Reading from the N-terminus, the 355-residue chain is MAGIKHRRDSAESINTDIITLSRFILDQQHLSAKNATGEFSMLLNSLQFAFKFISQTIRRAELVNLIGLAGASNSTGDQQKKLDVLGDEIFINAMKASGNVKVLVSEEQEDLIVFRNSPGKYAVCCDPIDGSSNLDAGVSVGTIVSLFKIHENQNGNSGEEDSEGTINDVARCGREMVAACYTMYGASTHLVLTTGAGVNGFTLDNNLGEFILTYPELRLPEQKSIYSINEGNTCYWEPTIADFIAKLKENSEENNGKPYSARYIGSMVADVHRTLLYGGLFSYPGDKKNPNGKLRLLYEAFPMAFLVEQAGGKAVNDRGERILDLVPQHIHDKSSIWLGSSGDVDKYLKHIGKL.

AMP-binding positions include 25 to 30 (ILDQQH) and 37 to 41 (TGEFS). Residues Asp-78 and Glu-107 each coordinate Mg(2+). AMP is bound at residue 121–122 (KY). Residues Asp-127, Ile-129, and Asp-130 each coordinate Mg(2+). A substrate-binding site is contributed by 130–133 (DGSS). Lys-149 serves as a coordination point for AMP. Residues 230 to 233 (NEGN), 263 to 268 (RYIGSM), Tyr-284, and 294 to 296 (KLR) each bind substrate. Glu-300 serves as a coordination point for Mg(2+).

It belongs to the FBPase class 1 family. In terms of assembly, homotetramer. Mg(2+) is required as a cofactor.

It carries out the reaction beta-D-fructose 1,6-bisphosphate + H2O = beta-D-fructose 6-phosphate + phosphate. Its pathway is carbohydrate biosynthesis; gluconeogenesis. With respect to regulation, subject to complex allosteric regulation. The enzyme can assume an active R-state, or an inactive T-state. Intermediate conformations may exist. AMP acts as allosteric inhibitor. AMP binding affects the turnover of bound substrate and not the affinity for substrate. This Kluyveromyces lactis (strain ATCC 8585 / CBS 2359 / DSM 70799 / NBRC 1267 / NRRL Y-1140 / WM37) (Yeast) protein is Fructose-1,6-bisphosphatase (FBP1).